The sequence spans 642 residues: tRNA uridine 5-carboxymethylaminomethyl modification enzyme MnmG (642 aa).

24 to 29 (GGGHAG) provides a ligand contact to FAD. NAD(+) is bound at residue 284 to 298 (GPRYCPSIEDKIHRF).

This sequence belongs to the MnmG family. In terms of assembly, homodimer. Heterotetramer of two MnmE and two MnmG subunits. FAD serves as cofactor.

It localises to the cytoplasm. NAD-binding protein involved in the addition of a carboxymethylaminomethyl (cmnm) group at the wobble position (U34) of certain tRNAs, forming tRNA-cmnm(5)s(2)U34. The protein is tRNA uridine 5-carboxymethylaminomethyl modification enzyme MnmG of Psychrobacter sp. (strain PRwf-1).